Consider the following 174-residue polypeptide: Putative serine protease 46 (174 aa).

Residues valine 43–glycine 174 form the Peptidase S1 domain. Cysteines 68 and 84 form a disulfide. Catalysis depends on charge relay system residues histidine 83 and aspartate 128.

This sequence belongs to the peptidase S1 family.

This is Putative serine protease 46 from Homo sapiens (Human).